We begin with the raw amino-acid sequence, 349 residues long: Green-sensitive opsin-1 (349 aa).

Topologically, residues 1–36 (MNGTEGKNFYVPMSNRTGLVRSPFEYPQYYLAEPWQ) are extracellular. N-linked (GlcNAc...) asparagine glycosylation is found at asparagine 2 and asparagine 15. The helical transmembrane segment at 37-61 (FKILALYLFFLMSMGLPINGLTLVV) threads the bilayer. Residues 62-73 (TAQHKKLRQPLN) are Cytoplasmic-facing. Residues 74-99 (FILVNLAVAGTIMVCFGFTVTFYTAI) form a helical membrane-spanning segment. At 100–113 (NGYFVLGPTGCAVE) the chain is on the extracellular side. The cysteines at positions 110 and 187 are disulfide-linked. A helical transmembrane segment spans residues 114 to 133 (GFMATLGGEVALWSLVVLAI). At 134–152 (ERYIVVCKPMGSFKFSSSH) the chain is on the cytoplasmic side. Residues 153 to 176 (AFAGIAFTWVMALACAAPPLFGWS) form a helical membrane-spanning segment. The Extracellular portion of the chain corresponds to 177-202 (RYIPEGMQCSCGPDYYTLNPDYNNES). The helical transmembrane segment at 203 to 230 (YVIYMFVCHFILPVAVIFFTYGRLVCTV) threads the bilayer. Residues 231-252 (KAAAAQQQDSASTQKAEREVTK) are Cytoplasmic-facing. Residues 253-276 (MVILMVFGFLIAWTPYATVAAWIF) form a helical membrane-spanning segment. Residues 277–284 (FNKGADFS) are Extracellular-facing. Residues 285 to 309 (AKFMAIPAFFSKSSALYNPVIYVLL) traverse the membrane as a helical segment. At lysine 296 the chain carries N6-(retinylidene)lysine. Residues 310–349 (NKQFRNCMLTTIFCGKNPLGDDESSTVSTSKTEVSSVSPA) lie on the Cytoplasmic side of the membrane. A disordered region spans residues 329–349 (GDDESSTVSTSKTEVSSVSPA). Residues 334-349 (STVSTSKTEVSSVSPA) are compositionally biased toward low complexity.

Belongs to the G-protein coupled receptor 1 family. Opsin subfamily. Phosphorylated on some or all of the serine and threonine residues present in the C-terminal region. As to expression, the color pigments are found in the cone photoreceptor cells.

The protein localises to the membrane. Visual pigments are the light-absorbing molecules that mediate vision. They consist of an apoprotein, opsin, covalently linked to cis-retinal. The protein is Green-sensitive opsin-1 of Carassius auratus (Goldfish).